Here is a 642-residue protein sequence, read N- to C-terminus: Putative ankyrin repeat protein L91 (642 aa).

14 ANK repeats span residues 42–76, 85–118, 153–186, 190–224, 227–256, 260–288, 292–322, 326–360, 365–397, 401–434, 438–470, 475–514, 518–550, and 554–587; these read HFTK…VKNP, EGWT…NPNI, NGFT…NVDS, NGET…TLHK, NGFT…DVNA, EGKS…EINH, NDIN…NPNE, NKNA…NPNI, SRTI…NVNA, EGRT…NVNH, DGAH…DVNI, KKWT…NVNA, YGNN…NVNH, and NGDT…NPNI.

This Acanthamoeba polyphaga (Amoeba) protein is Putative ankyrin repeat protein L91.